The chain runs to 322 residues: MAQSEVNSVCVASDRAGDTGDQSDDSSDGSLFKTQCAPSPIQKQRHPTVKRVTLPASVETDSSSDSSIEPRPLTLKAIFERFKKKKRKKRKKRKYEPKLRPRGRPRGKPSGTRITRRSQIDAKQIKDKGAVFPFLESESGRKPLPWKKILTYEQAVARGFFHHIEKLKYEHHLKECLKQMHAGEDLEKEDLDSRRHKYMDDDGSLSPIEEPLTEDEATNPQAECDIKLVEDSCFIISSEFSRKRNLEQEKIKKESTFSKKAKDATHREKGHRRTLKGNEHVTIEEDSRPQPRPFAHLQSKVMKKGELEYLEVHHLCGLSQPL.

Disordered stretches follow at residues 1-70 and 82-116; these read MAQS…SIEP and FKKK…RITR. S23 bears the Phosphoserine mark. Positions 82-107 are enriched in basic residues; the sequence is FKKKKRKKRKKRKYEPKLRPRGRPRG. S137 carries the phosphoserine modification. The tract at residues 198 to 219 is disordered; sequence YMDDDGSLSPIEEPLTEDEATN. S232 is modified (phosphoserine). The span at 257–267 shows a compositional bias: basic and acidic residues; the sequence is FSKKAKDATHR. Positions 257 to 276 are disordered; that stretch reads FSKKAKDATHREKGHRRTLK.

As to quaternary structure, component of the transcription factor SL1/TIF-IB complex, composed of TBP and at least TAF1A, TAF1B, TAF1C and TAF1D. Interacts with UBTF.

The protein localises to the nucleus. Its function is as follows. Component of the transcription factor SL1/TIF-IB complex, which is involved in the assembly of the PIC (preinitiation complex) during RNA polymerase I-dependent transcription. The rate of PIC formation probably is primarily dependent on the rate of association of SL1/TIF-IB with the rDNA promoter. SL1/TIF-IB is involved in stabilization of nucleolar transcription factor 1/UBTF on rDNA. Formation of SL1/TIF-IB excludes the association of TBP with TFIID subunits. The chain is TATA box-binding protein-associated factor RNA polymerase I subunit D (Taf1d) from Mus musculus (Mouse).